Consider the following 217-residue polypeptide: Probable transaldolase (217 aa).

Lys83 serves as the catalytic Schiff-base intermediate with substrate.

The protein belongs to the transaldolase family. Type 3B subfamily.

It localises to the cytoplasm. It catalyses the reaction D-sedoheptulose 7-phosphate + D-glyceraldehyde 3-phosphate = D-erythrose 4-phosphate + beta-D-fructose 6-phosphate. It functions in the pathway carbohydrate degradation; pentose phosphate pathway; D-glyceraldehyde 3-phosphate and beta-D-fructose 6-phosphate from D-ribose 5-phosphate and D-xylulose 5-phosphate (non-oxidative stage): step 2/3. In terms of biological role, transaldolase is important for the balance of metabolites in the pentose-phosphate pathway. This is Probable transaldolase from Chelativorans sp. (strain BNC1).